The sequence spans 450 residues: Probable ECA polymerase (450 aa).

11 consecutive transmembrane segments (helical) span residues 6–26, 37–57, 63–83, 120–140, 155–175, 181–201, 207–227, 228–248, 341–361, 378–398, and 410–430; these read FSGLLVVWLLSTLFIATLTWF, VFFSLLFLLTFFFGFPLTSVL, VGVAPPEILLQALLSAACFYA, LMGIALVSVGIFFMHNGFLLF, GVALKRFFYFFIPAMLVIYFL, AWLFFLVSTVAFGLLTYMIVG, IIIAFAIFLFIGIIRGWISLW, MLVAAGVLGIVGMFWLALKRY, LVVMGGALFIPLGAVAVGLII, YKAAILHSFCFGAIFNMIVLA, and VFFLVIFGACLLVAKLLFWLF.

This sequence belongs to the WzyE family. As to quaternary structure, probably part of a complex composed of WzxE, WzyE and WzzE.

The protein localises to the cell inner membrane. It functions in the pathway bacterial outer membrane biogenesis; enterobacterial common antigen biosynthesis. Its function is as follows. Probably involved in the polymerization of enterobacterial common antigen (ECA) trisaccharide repeat units. The sequence is that of Probable ECA polymerase from Citrobacter koseri (strain ATCC BAA-895 / CDC 4225-83 / SGSC4696).